The primary structure comprises 395 residues: Argininosuccinate synthase (395 aa).

ATP contacts are provided by residues 10 to 18 (AYSGGLDTS) and alanine 37. L-citrulline contacts are provided by tyrosine 88 and serine 93. Residue glycine 118 coordinates ATP. The L-aspartate site is built by threonine 120, asparagine 124, and aspartate 125. An L-citrulline-binding site is contributed by asparagine 124. 5 residues coordinate L-citrulline: arginine 128, serine 179, serine 188, glutamate 264, and tyrosine 276.

This sequence belongs to the argininosuccinate synthase family. Type 1 subfamily. Homotetramer.

The protein resides in the cytoplasm. It catalyses the reaction L-citrulline + L-aspartate + ATP = 2-(N(omega)-L-arginino)succinate + AMP + diphosphate + H(+). It participates in amino-acid biosynthesis; L-arginine biosynthesis; L-arginine from L-ornithine and carbamoyl phosphate: step 2/3. This chain is Argininosuccinate synthase, found in Pelagibacter ubique (strain HTCC1062).